The chain runs to 530 residues: Phosphoenolpyruvate carboxykinase (ATP) (530 aa).

Arginine 60, tyrosine 195, and lysine 201 together coordinate substrate. ATP-binding positions include lysine 201, histidine 221, and 237–245; that span reads GLSGTGKTT. Mn(2+)-binding residues include lysine 201 and histidine 221. Aspartate 258 is a Mn(2+) binding site. Residues glutamate 286, arginine 324, and serine 449 each coordinate ATP. A substrate-binding site is contributed by arginine 324.

The protein belongs to the phosphoenolpyruvate carboxykinase (ATP) family. Mn(2+) is required as a cofactor.

The protein resides in the cytoplasm. It catalyses the reaction oxaloacetate + ATP = phosphoenolpyruvate + ADP + CO2. It functions in the pathway carbohydrate biosynthesis; gluconeogenesis. Functionally, involved in the gluconeogenesis. Catalyzes the conversion of oxaloacetate (OAA) to phosphoenolpyruvate (PEP) through direct phosphoryl transfer between the nucleoside triphosphate and OAA. The protein is Phosphoenolpyruvate carboxykinase (ATP) of Geobacter metallireducens (strain ATCC 53774 / DSM 7210 / GS-15).